Reading from the N-terminus, the 357-residue chain is tRNA/tmRNA (uracil-C(5))-methyltransferase (357 aa).

5 residues coordinate S-adenosyl-L-methionine: Gln-180, Tyr-209, Asn-214, Glu-230, and Asp-290. The Nucleophile role is filled by Cys-315. Glu-349 serves as the catalytic Proton acceptor.

It belongs to the class I-like SAM-binding methyltransferase superfamily. RNA M5U methyltransferase family. TrmA subfamily.

The catalysed reaction is uridine(54) in tRNA + S-adenosyl-L-methionine = 5-methyluridine(54) in tRNA + S-adenosyl-L-homocysteine + H(+). It catalyses the reaction uridine(341) in tmRNA + S-adenosyl-L-methionine = 5-methyluridine(341) in tmRNA + S-adenosyl-L-homocysteine + H(+). Functionally, dual-specificity methyltransferase that catalyzes the formation of 5-methyluridine at position 54 (m5U54) in all tRNAs, and that of position 341 (m5U341) in tmRNA (transfer-mRNA). The polypeptide is tRNA/tmRNA (uracil-C(5))-methyltransferase (Campylobacter jejuni subsp. jejuni serotype O:2 (strain ATCC 700819 / NCTC 11168)).